The sequence spans 543 residues: Cysteine/serine-rich nuclear protein 2 (543 aa).

The residue at position 1 (M1) is an N-acetylmethionine. Disordered regions lie at residues 1-51, 281-305, and 488-543; these read MDAF…SFTP, KRQVSRPAAPDEEPSPTASCSLTGA, and DCNP…PLAV. Residues 31-40 are compositionally biased toward low complexity; the sequence is SSDSADSCDS. Polar residues-rich tracts occupy residues 42–51 and 296–305; these read NPPTTASFTP and PTASCSLTGA.

The protein belongs to the AXUD1 family.

Its subcellular location is the nucleus. Functionally, binds to the consensus sequence 5'-AGAGTG-3' and has transcriptional activator activity. May play a role in apoptosis. The sequence is that of Cysteine/serine-rich nuclear protein 2 (CSRNP2) from Homo sapiens (Human).